The primary structure comprises 811 residues: MRRSGSKESTIVYSALSLAQAGRGPEALALLEPLKSTPINSLELLDIIQAVYDDQKKGEESFVFWEKFLQTYGKQEKNLLAYFKASIRIKSLSHQRKAAVELQKNFPSRKHTLWVISSLYLLSKKSENEVEQRLLKALAEKTAKLIFEKPTGYIDSCEEFHLYLDVLLLVGDKDRALDALIHQDADRFVDADADLLLRKLELLASCARWDSLFTFSLSLFQTGNTDWKVCKALLDSASNDDSKLVPLKDCILKALSTSSTKRNLHLLWIEASARFFPEEHESALLGYIKKLYMKPIVFEDLRPYLLKLNVDAQHRLLDAFKLADLGESNESQKVDKLYAEVLLLKIHFLLFESFTAESVVDYVRRCFVAFEKGLSLSKGLLPTDFTHGYEALLLAVHSLIYMWEGNKDLKPAEKQALIFDAICLLEKGITYSQHNFHLKLPLIRLYLLLDGGFPAAAKVYDTMSIKQIQNDTLDHYLLTRATTYYPSSVTSHYINSSLKIYGSNEFETPEMISMAYEDGAYSQIEDMRNFRSRLDHSTWKSISLVERARIHYLTAFKPPKQYLPKCSSPKDNRDLKVFADYGSDKLPTVEESLRNSPKPDTLWIHLTVIGHSLVQDSIVNGDFEKAVLSAKEMEVLCENNDLSKQLTSEEIVHMKLLIQLGLLSVKVKNGDYENSSFETIENLIESFDYENSTPLSQLTKYTEIINDLITCLNSFLYHVSATKKKEFTRQYQLLKNISSNKLGSISGITKHKKKAARKYVSELLSNSWLSNLSETQVPYDPKFAKQVGEGMIDSYIQTTDAVSKLPKFVKF.

Belongs to the MDM20/NAA25 family. Component of the N-terminal acetyltransferase B (NatB) complex.

It is found in the cytoplasm. In terms of biological role, non-catalytic subunit of the NatB N-terminal acetyltransferase, which catalyzes acetylation of the amino-terminal methionine residues of all proteins beginning with Met-Asp or Met-Glu and of some proteins beginning with Met-Asn or Met-Met. The polypeptide is N-terminal acetyltransferase B complex subunit arm1 (arm1) (Schizosaccharomyces pombe (strain 972 / ATCC 24843) (Fission yeast)).